A 383-amino-acid chain; its full sequence is Acetylornithine deacetylase (383 aa).

Residue histidine 80 coordinates Zn(2+). Residue aspartate 82 is part of the active site. Aspartate 112 contributes to the Zn(2+) binding site. Glutamate 144 is a catalytic residue. The Zn(2+) site is built by glutamate 145, glutamate 169, and histidine 355.

Belongs to the peptidase M20A family. ArgE subfamily. Homodimer. Requires Zn(2+) as cofactor. It depends on Co(2+) as a cofactor. Glutathione serves as cofactor.

It localises to the cytoplasm. It carries out the reaction N(2)-acetyl-L-ornithine + H2O = L-ornithine + acetate. Its pathway is amino-acid biosynthesis; L-arginine biosynthesis; L-ornithine from N(2)-acetyl-L-ornithine (linear): step 1/1. Functionally, catalyzes the hydrolysis of the amide bond of N(2)-acetylated L-amino acids. Cleaves the acetyl group from N-acetyl-L-ornithine to form L-ornithine, an intermediate in L-arginine biosynthesis pathway, and a branchpoint in the synthesis of polyamines. The chain is Acetylornithine deacetylase from Escherichia coli O45:K1 (strain S88 / ExPEC).